The following is a 328-amino-acid chain: Phenylalanine--tRNA ligase alpha subunit (328 aa).

Glu-245 is a binding site for Mg(2+).

Belongs to the class-II aminoacyl-tRNA synthetase family. Phe-tRNA synthetase alpha subunit type 1 subfamily. Tetramer of two alpha and two beta subunits. It depends on Mg(2+) as a cofactor.

It localises to the cytoplasm. The catalysed reaction is tRNA(Phe) + L-phenylalanine + ATP = L-phenylalanyl-tRNA(Phe) + AMP + diphosphate + H(+). The protein is Phenylalanine--tRNA ligase alpha subunit of Helicobacter pylori (strain HPAG1).